We begin with the raw amino-acid sequence, 101 residues long: Acylphosphatase (101 aa).

In terms of domain architecture, Acylphosphatase-like spans 11–99; sequence SWLVKAIGRV…PRLNRFDRLP (89 aa). Residues Arg26 and Asn44 contribute to the active site.

Belongs to the acylphosphatase family.

It catalyses the reaction an acyl phosphate + H2O = a carboxylate + phosphate + H(+). The polypeptide is Acylphosphatase (acyP) (Polaromonas naphthalenivorans (strain CJ2)).